Here is a 195-residue protein sequence, read N- to C-terminus: Ferredoxin-2, mitochondrial (195 aa).

A mitochondrion-targeting transit peptide spans 1 to 61; it reads MAAAAAVRAG…RRLRTSIGVC (61 aa). The 102-residue stretch at 81–182 folds into the 2Fe-2S ferredoxin-type domain; that stretch reads NVVYIDRSGR…GMELTLPKVT (102 aa). Positions 117, 123, 126, and 163 each coordinate [2Fe-2S] cluster.

This sequence belongs to the adrenodoxin/putidaredoxin family. As to quaternary structure, component of the mitochondrial core iron-sulfur cluster (ISC) complex composed of NFS1, LYRM4, NDUFAB1, ISCU, FXN, and FDX2; this complex is a heterohexamer containing two copies of each monomer. Form a heterodimer complex with NFS1. Requires [2Fe-2S] cluster as cofactor.

The protein localises to the mitochondrion. It localises to the mitochondrion matrix. Functionally, electron donor, of the core iron-sulfur cluster (ISC) assembly complex, that acts to reduce the persulfide into sulfide during [2Fe-2S] clusters assembly on the scaffolding protein ISCU. The core iron-sulfur cluster (ISC) assembly complex is involved in the de novo synthesis of a [2Fe-2S] cluster, the first step of the mitochondrial iron-sulfur protein biogenesis. This process is initiated by the cysteine desulfurase complex (NFS1:LYRM4:NDUFAB1) that produces persulfide which is delivered on the scaffold protein ISCU in a FXN-dependent manner. Then this complex is stabilized by FDX2 which provides reducing equivalents to accomplish the [2Fe-2S] cluster assembly. Finally, the [2Fe-2S] cluster is transferred from ISCU to chaperone proteins, including HSCB, HSPA9 and GLRX5. Essential for coenzyme Q biosynthesis: together with FDXR, transfers the electrons required for the hydroxylation reaction performed by COQ6. The chain is Ferredoxin-2, mitochondrial from Danio rerio (Zebrafish).